A 337-amino-acid polypeptide reads, in one-letter code: DNA-directed RNA polymerase subunit alpha (337 aa).

The segment at 1–233 (MVREKVTVST…DLFIPFLHME (233 aa)) is alpha N-terminal domain (alpha-NTD). Residues 265 to 337 (KKIALKSIFI…FVIDLAKNKF (73 aa)) form an alpha C-terminal domain (alpha-CTD) region.

It belongs to the RNA polymerase alpha chain family. In terms of assembly, in plastids the minimal PEP RNA polymerase catalytic core is composed of four subunits: alpha, beta, beta', and beta''. When a (nuclear-encoded) sigma factor is associated with the core the holoenzyme is formed, which can initiate transcription.

The protein localises to the plastid. It localises to the chloroplast. It carries out the reaction RNA(n) + a ribonucleoside 5'-triphosphate = RNA(n+1) + diphosphate. Its function is as follows. DNA-dependent RNA polymerase catalyzes the transcription of DNA into RNA using the four ribonucleoside triphosphates as substrates. The chain is DNA-directed RNA polymerase subunit alpha from Solanum lycopersicum (Tomato).